The sequence spans 87 residues: CRISPR-associated endoribonuclease Cas2 (87 aa).

Asp8 is a Mg(2+) binding site.

This sequence belongs to the CRISPR-associated endoribonuclease Cas2 protein family. As to quaternary structure, homodimer, forms a heterotetramer with a Cas1 homodimer. The cofactor is Mg(2+).

Functionally, CRISPR (clustered regularly interspaced short palindromic repeat), is an adaptive immune system that provides protection against mobile genetic elements (viruses, transposable elements and conjugative plasmids). CRISPR clusters contain sequences complementary to antecedent mobile elements and target invading nucleic acids. CRISPR clusters are transcribed and processed into CRISPR RNA (crRNA). Functions as a ssRNA-specific endoribonuclease. Involved in the integration of spacer DNA into the CRISPR cassette. This is CRISPR-associated endoribonuclease Cas2 from Methanosarcina acetivorans (strain ATCC 35395 / DSM 2834 / JCM 12185 / C2A).